A 70-amino-acid polypeptide reads, in one-letter code: MPTIRVKENEPFEVALRRFKRAVEKTGLLTELRAREFYEKPTTERKRKHAAAVKRHYKRIRSQMLPPKLY.

This sequence belongs to the bacterial ribosomal protein bS21 family.

In Chromobacterium violaceum (strain ATCC 12472 / DSM 30191 / JCM 1249 / CCUG 213 / NBRC 12614 / NCIMB 9131 / NCTC 9757 / MK), this protein is Small ribosomal subunit protein bS21.